We begin with the raw amino-acid sequence, 185 residues long: MRCPFCGGPDTQVKDSRPSEDSSAIRRRRVCPDCGGRFTTFERVQLRELVVLKRSGKRVPFDRDKLQRSIDVALRKRTVDPERVERLVSGITRRLESGGEGEVTSEAIGEAVMEGLKGLDDVAYVRFASVYKNFREAQDFQDLLGTLGERLEGEGDLPEDGEAAPAPPDEVVAAPRRGRPARKRA.

The disordered stretch occupies residues 1 to 24; that stretch reads MRCPFCGGPDTQVKDSRPSEDSSA. The segment at 3-34 is a zinc-finger region; it reads CPFCGGPDTQVKDSRPSEDSSAIRRRRVCPDC. Basic and acidic residues predominate over residues 12 to 24; that stretch reads QVKDSRPSEDSSA. Positions 49 to 139 constitute an ATP-cone domain; that stretch reads LVVLKRSGKR…VYKNFREAQD (91 aa). The segment at 149-185 is disordered; that stretch reads ERLEGEGDLPEDGEAAPAPPDEVVAAPRRGRPARKRA. The span at 176–185 shows a compositional bias: basic residues; that stretch reads RRGRPARKRA.

It belongs to the NrdR family. It depends on Zn(2+) as a cofactor.

Negatively regulates transcription of bacterial ribonucleotide reductase nrd genes and operons by binding to NrdR-boxes. This chain is Transcriptional repressor NrdR, found in Methylorubrum extorquens (strain PA1) (Methylobacterium extorquens).